The sequence spans 39 residues: Basic phospholipase A2 (39 aa).

Positions 27, 29, and 31 each coordinate Ca(2+).

The protein belongs to the phospholipase A2 family. Group II subfamily. D49 sub-subfamily. The cofactor is Ca(2+). In terms of tissue distribution, expressed by the venom gland.

The protein localises to the secreted. It catalyses the reaction a 1,2-diacyl-sn-glycero-3-phosphocholine + H2O = a 1-acyl-sn-glycero-3-phosphocholine + a fatty acid + H(+). Its activity is regulated as follows. Is selectively inhibited by the gamma-phospholipase A2 inhibitor (PLI) CgMIP-I (AC P0DQP7) but not by the alpha-PLI CgMIP-II (AC P0DQP8). In terms of biological role, snake venom phospholipase A2 (PLA2) that shows high myotoxic activities, induces mild edema, and shows cytolytic, and anti-coagulant activities, as well as intracerebral lethal effect. Does not induce lethality at a dose of 5 ug/g, when intravenously injected into mice. PLA2 catalyzes the calcium-dependent hydrolysis of the 2-acyl groups in 3-sn-phosphoglycerides. This chain is Basic phospholipase A2, found in Cerrophidion godmani (Porthidium godmani).